The following is a 1345-amino-acid chain: Mediator of RNA polymerase II transcription subunit 13 (1345 aa).

2 disordered regions span residues K363–P387 and F402–G537. Over residues S364–S375 the composition is skewed to low complexity. Positions P406–L415 are enriched in polar residues. Residues L469–L482 show a composition bias toward acidic residues. Residues S486–G501 show a composition bias toward polar residues.

The protein belongs to the Mediator complex subunit 13 family. As to quaternary structure, component of the SRB8-11 complex, which itself associates with the Mediator complex.

Its subcellular location is the nucleus. Component of the SRB8-11 complex. The SRB8-11 complex is a regulatory module of the Mediator complex which is itself involved in regulation of basal and activated RNA polymerase II-dependent transcription. The SRB8-11 complex may be involved in the transcriptional repression of a subset of genes regulated by Mediator. It may inhibit the association of the Mediator complex with RNA polymerase II to form the holoenzyme complex. This Candida glabrata (strain ATCC 2001 / BCRC 20586 / JCM 3761 / NBRC 0622 / NRRL Y-65 / CBS 138) (Yeast) protein is Mediator of RNA polymerase II transcription subunit 13 (SSN2).